A 320-amino-acid polypeptide reads, in one-letter code: rRNA methyltransferase 2, mitochondrial (320 aa).

A mitochondrion-targeting transit peptide spans 1–18 (MILVYNRIRSIISSSLGR). S-adenosyl-L-methionine contacts are provided by residues 83–86 (PGAW), Asp-104, 178–179 (DI), and Asp-203. Lys-264 serves as the catalytic Proton acceptor.

Belongs to the class I-like SAM-binding methyltransferase superfamily. RNA methyltransferase RlmE family.

The protein localises to the mitochondrion. The enzyme catalyses uridine(2791) in 21S rRNA + S-adenosyl-L-methionine = 2'-O-methyluridine(2791) in 21S rRNA + S-adenosyl-L-homocysteine + H(+). Its function is as follows. S-adenosyl-L-methionine-dependent 2'-O-ribose methyltransferase that catalyzes the formation of 2'-O-methyluridine at position 2791 (Um2791) in the 21S mitochondrial large subunit ribosomal RNA (mtLSU rRNA), a universally conserved modification in the peptidyl transferase domain of the mtLSU rRNA. This is rRNA methyltransferase 2, mitochondrial from Saccharomyces cerevisiae (strain ATCC 204508 / S288c) (Baker's yeast).